The chain runs to 1217 residues: Sterol 3-beta-glucosyltransferase (1217 aa).

Residues 195–232 (EFVRKYFGISEEETLIGHYTGWLLQEVLIQGNLFITNS) form the GRAM 1 domain. In terms of domain architecture, PH spans 246-343 (AVVLCGKLKL…WVKCLKKQLF (98 aa)). The 67-residue stretch at 590-656 (AKIKDWFNLH…EDIEGYNEIL (67 aa)) folds into the GRAM 2 domain. UDP-alpha-D-glucose-binding residues include S766, R767, D769, N1042, I1072, H1074, H1087, S1090, G1091, T1092, D1111, and Q1112.

This sequence belongs to the glycosyltransferase 28 family.

It localises to the cytoplasm. Its subcellular location is the membrane. It catalyses the reaction a sterol + UDP-alpha-D-glucose = a sterol 3-beta-D-glucoside + UDP + H(+). It carries out the reaction ergosterol + UDP-alpha-D-glucose = ergosteryl 3-beta-D-glucoside + UDP + H(+). Its function is as follows. Sterol glycosyltransferase responsible for the glycosylation of ergosterol to form ergosterol-glucoside. The chain is Sterol 3-beta-glucosyltransferase from Vanderwaltozyma polyspora (strain ATCC 22028 / DSM 70294 / BCRC 21397 / CBS 2163 / NBRC 10782 / NRRL Y-8283 / UCD 57-17) (Kluyveromyces polysporus).